Here is a 314-residue protein sequence, read N- to C-terminus: Putative glycosyltransferase ORF31 (314 aa).

The protein belongs to the glycosyltransferase group 1 family.

This Haloarcula hispanica (His1V) protein is Putative glycosyltransferase ORF31.